A 295-amino-acid polypeptide reads, in one-letter code: Non-selective voltage-gated ion channel VDAC2 (295 aa).

K24 and K32 together coordinate ATP. K32 bears the N6-acetyllysine; alternate mark. K32 bears the N6-succinyllysine; alternate mark. Residue K32 forms a Glycyl lysine isopeptide (Lys-Gly) (interchain with G-Cter in ubiquitin); alternate linkage. 2 consecutive transmembrane segments (beta stranded) span residues L38–T45 and V51–N60. Residue K65 forms a Glycyl lysine isopeptide (Lys-Gly) (interchain with G-Cter in ubiquitin) linkage. Residues V66–W76 form a beta stranded membrane-spanning segment. Y79 is modified (phosphotyrosine). The next 3 membrane-spanning stretches (beta stranded) occupy residues L81–N88, T92–E100, and L107–S116. The residue at position 119 (T119) is a Phosphothreonine. N6-acetyllysine; alternate is present on K121. K121 is covalently cross-linked (Glycyl lysine isopeptide (Lys-Gly) (interchain with G-Cter in ubiquitin); alternate). K122 is covalently cross-linked (Glycyl lysine isopeptide (Lys-Gly) (interchain with G-Cter in ubiquitin)). 4 beta stranded membrane passes run K122 to K131, I135 to D144, P148 to G157, and W161 to D170. K173 is covalently cross-linked (Glycyl lysine isopeptide (Lys-Gly) (interchain with G-Cter in ubiquitin)). Beta stranded transmembrane passes span T177–T187, F190–N197, E201–V210, F214–W222, T229–Q238, and A243–N250. S252 is subject to Phosphoserine. NAD(+)-binding positions include L254–G256 and S272–D276. 2 beta stranded membrane passes run L254–L263 and V267–V275. N6-acetyllysine; alternate is present on K278. K278 participates in a covalent cross-link: Glycyl lysine isopeptide (Lys-Gly) (interchain with G-Cter in ubiquitin); alternate. The chain crosses the membrane as a beta stranded span at residues H285–A295.

This sequence belongs to the eukaryotic mitochondrial porin family. In terms of assembly, monomer, homodimer and higher order oligomers; formation of higher order structures is necessary for scramblase activity. Interacts with ARMC12 in a TBC1D21-dependent manner. Interacts with KLC3. Interacts with SPATA33. Interacts with PPP3CC in a SPATA33-dependent manner. Ubiquitinated by PRKN during mitophagy, leading to its degradation and enhancement of mitophagy. Deubiquitinated by USP30. Highest levels of expression detected in testis, less but still abundant expression in heart, kidney, brain, and skeletal muscle. Expressed in the sperm midpiece (at protein level).

Its subcellular location is the mitochondrion outer membrane. It localises to the membrane. The enzyme catalyses chloride(in) = chloride(out). The catalysed reaction is K(+)(in) = K(+)(out). It catalyses the reaction a 1,2-diacyl-sn-glycero-3-phospho-L-serine(in) = a 1,2-diacyl-sn-glycero-3-phospho-L-serine(out). It carries out the reaction a 1,2-diacyl-sn-glycero-3-phosphocholine(in) = a 1,2-diacyl-sn-glycero-3-phosphocholine(out). The enzyme catalyses a 1,2-diacyl-sn-glycero-3-phospho-(1D-myo-inositol)(in) = a 1,2-diacyl-sn-glycero-3-phospho-(1D-myo-inositol)(out). In terms of biological role, non-selective voltage-gated ion channel that mediates the transport of anions and cations through the mitochondrion outer membrane and plasma membrane. The channel adopts an open conformation at zero mV and a closed conformation at both positive and negative potentials. There are two populations of channels; the main that functions in a lower open-state conductance with lower ion selectivity, that switch, in a voltage-dependent manner, from the open to a low-conducting 'closed' state and the other that has a normal ion selectivity in the typical high conductance, 'open' state. Binds various lipids, including the sphingolipid ceramide, the phospholipid phosphatidylcholine, and the sterols cholesterol and oxysterol. Binding of ceramide promotes the mitochondrial outer membrane permeabilization (MOMP) apoptotic pathway. Its function is as follows. Catalyzes the scrambling of phospholipids across the outer mitochondrial membrane; the mechanism is unrelated to channel activity and is capable of translocating both anionic and zwitterionic phospholipids. The sequence is that of Non-selective voltage-gated ion channel VDAC2 from Mus musculus (Mouse).